Consider the following 476-residue polypeptide: Cysteine--tRNA ligase (476 aa).

Cys28 lines the Zn(2+) pocket. Positions 30 to 40 (PTVYDHTHLGH) match the 'HIGH' region motif. Zn(2+)-binding residues include Cys208, His233, and Glu237. The short motif at 265-269 (KMSKS) is the 'KMSKS' region element. Lys268 lines the ATP pocket.

Belongs to the class-I aminoacyl-tRNA synthetase family. Zn(2+) serves as cofactor.

It localises to the cytoplasm. It carries out the reaction tRNA(Cys) + L-cysteine + ATP = L-cysteinyl-tRNA(Cys) + AMP + diphosphate. This Methanococcus maripaludis (strain C6 / ATCC BAA-1332) protein is Cysteine--tRNA ligase.